Here is a 586-residue protein sequence, read N- to C-terminus: ATPase family AAA domain-containing protein 3A (586 aa).

Disordered stretches follow at residues 1 to 55 and 111 to 134; these read MSWL…PTGL and QAEE…QYQD. The residue at position 2 (Ser2) is an N-acetylserine. The segment at 2 to 50 is required for interaction with the inner surface of the mitochondrial outer membrane; that stretch reads SWLFGINKGPKGEGAGPPPPLPPAQPGAEGGGDRGLGDRPAPKDKWSNF. Residues 2–246 are Mitochondrial intermembrane-facing; the sequence is SWLFGINKGP…FRAFVTDWDK (245 aa). Pro residues predominate over residues 17 to 26; sequence GPPPPLPPAQ. Composition is skewed to basic and acidic residues over residues 32–48 and 111–125; these read GGDR…DKWS and QAEE…ETRQ. Residues 86–219 adopt a coiled-coil conformation; sequence QLEQQSKLKE…QIRLKAAEHR (134 aa). Residues 247 to 264 traverse the membrane as a helical segment; sequence VTATVAGLTLLAVGVYSA. Residues 265-586 lie on the Mitochondrial matrix side of the membrane; it reads KNATLVAGRF…PGRGDEPSPS (322 aa). The interval 290-305 is S100B-binding; that stretch reads RITVLEALRHPIQVSR. Ser321 is subject to Phosphoserine. ATP is bound at residue 352 to 359; sequence GPPGTGKT. At Lys491 the chain carries N6-acetyllysine.

Belongs to the AAA ATPase family. In terms of assembly, can form homooligomers. Homodimer formation at the N-terminus may be regulated by ATP and is required for the interaction with the inner surface of the mitochondrial outer membrane and correct mitochondrial homeostasis. Interacts with components of the mitochondrial ribosome and with other proteins involved in mitochondrial RNA metabolism. May also interact with protein involved in lipid metabolism, including STARD9. May interact with FAM210A. Interacts with GADD45GIP1. Interacts with S100B in a Ca(+2)- and Zn(+2)-dependent manner; this interaction probably occurs in the cytosol prior to mitochondrial targeting. S100B could assist ATAD3A cytoplasmic processing, preventing aggregation and favoring mitochondrial localization. Interacts with HSP60/HSPD1. Forms heterooligomers with ATAD3B; this interaction may affect ATAD3A activity. Interacts with CLPB. Interacts with EIF2AK3/PERK; ATAD3A and EIF2S1/eIF-2-alpha occupy a common binding site within the cytoplasmic loop of EIF2AK3/PERK, leading to prevent EIF2AK3/PERK association with its substrate EIF2S1/eIF-2-alpha. In terms of tissue distribution, overexpressed in lung adenocarcinomas (at protein level).

The protein resides in the mitochondrion inner membrane. It localises to the mitochondrion matrix. Its subcellular location is the mitochondrion nucleoid. The catalysed reaction is ATP + H2O = ADP + phosphate + H(+). In terms of biological role, essential for mitochondrial network organization, mitochondrial metabolism and cell growth at organism and cellular level. May play an important role in mitochondrial protein synthesis. May also participate in mitochondrial DNA replication. May bind to mitochondrial DNA D-loops and contribute to nucleoid stability. Required for enhanced channeling of cholesterol for hormone-dependent steroidogenesis. Involved in mitochondrial-mediated antiviral innate immunity. Required to protect mitochondria from the PERK-mediated unfolded protein response: specifically inhibits the activity of EIF2AK3/PERK at mitochondria-endoplasmic reticulum contact sites, thereby providing a safe haven for mitochondrial protein translation during endoplasmic reticulum stress. Ability to inhibit EIF2AK3/PERK is independent of its ATPase activity. Also involved in the mitochondrial DNA damage response by promoting signaling between damaged genomes and the mitochondrial membrane, leading to activation of the integrated stress response (ISR). In Homo sapiens (Human), this protein is ATPase family AAA domain-containing protein 3A.